The following is a 329-amino-acid chain: Probable fructokinase-2 (329 aa).

The protein belongs to the carbohydrate kinase PfkB family.

The enzyme catalyses D-fructose + ATP = D-fructose 6-phosphate + ADP + H(+). Its pathway is glycan biosynthesis; starch biosynthesis. In terms of biological role, may play an important role in maintaining the flux of carbon towards starch formation. The polypeptide is Probable fructokinase-2 (Arabidopsis thaliana (Mouse-ear cress)).